The sequence spans 308 residues: Transcriptional adapter 1-2 (308 aa).

The protein belongs to the TADA1 family. Component of the Spt-Ada-Gcn5 acetyltransferase (SAGA) complex consisting of wda/Taf5L, Saf6, Taf9, Taf10b, Taf12, Ada1, Spt3, Spt7, Spt20, Sf3b3, Sf3b5, Nipped-A/Tra1, a histone acetyltransferase (HAT) module made up of Gcn5, Ada2b (Isoform B), Ada3 and Sgf29, and a deubiquitinase (DUB) module made up of not/nonstop, Sgf11 and e(y)2 tethered to SAGA by Atxn7. Not a component of the Ada2a-containing ATAC complex.

It localises to the nucleus. In terms of biological role, component of the transcription regulatory complex SAGA, a multiprotein complex that activates transcription by remodeling chromatin and mediating histone acetylation and deubiquitination. The SAGA complex predominantly acetylates histone H3. This is Transcriptional adapter 1-2 from Drosophila melanogaster (Fruit fly).